The following is a 351-amino-acid chain: Ribosomal RNA large subunit methyltransferase N (351 aa).

E92 serves as the catalytic Proton acceptor. Residues 105–337 (GHPRSTICVS…CTVRVEKGTE (233 aa)) form the Radical SAM core domain. Cysteines 112 and 342 form a disulfide. C119, C123, and C126 together coordinate [4Fe-4S] cluster. S-adenosyl-L-methionine-binding positions include 169–170 (GE), S201, 224–226 (SLH), and N300. Residue C342 is the S-methylcysteine intermediate of the active site.

The protein belongs to the radical SAM superfamily. RlmN family. [4Fe-4S] cluster serves as cofactor.

Its subcellular location is the cytoplasm. It catalyses the reaction adenosine(2503) in 23S rRNA + 2 reduced [2Fe-2S]-[ferredoxin] + 2 S-adenosyl-L-methionine = 2-methyladenosine(2503) in 23S rRNA + 5'-deoxyadenosine + L-methionine + 2 oxidized [2Fe-2S]-[ferredoxin] + S-adenosyl-L-homocysteine. In terms of biological role, specifically methylates position 2 of adenine 2503 in 23S rRNA. In Nitrosopumilus maritimus (strain SCM1), this protein is Ribosomal RNA large subunit methyltransferase N.